Consider the following 157-residue polypeptide: Large ribosomal subunit protein uL15 (157 aa).

Residues 1 to 13 (MKLNDLRDKDGAT) are compositionally biased toward basic and acidic residues. The disordered stretch occupies residues 1-39 (MKLNDLRDKDGATHSKKRLGRGIGSGSGKTAGRGVKGQK). Residues 21-35 (RGIGSGSGKTAGRGV) show a composition bias toward gly residues.

The protein belongs to the universal ribosomal protein uL15 family. Part of the 50S ribosomal subunit.

Binds to the 23S rRNA. This Mesorhizobium japonicum (strain LMG 29417 / CECT 9101 / MAFF 303099) (Mesorhizobium loti (strain MAFF 303099)) protein is Large ribosomal subunit protein uL15.